We begin with the raw amino-acid sequence, 458 residues long: UDP-N-acetylmuramoylalanine--D-glutamate ligase (458 aa).

124–130 (GSDGKTT) contacts ATP.

It belongs to the MurCDEF family.

It is found in the cytoplasm. It catalyses the reaction UDP-N-acetyl-alpha-D-muramoyl-L-alanine + D-glutamate + ATP = UDP-N-acetyl-alpha-D-muramoyl-L-alanyl-D-glutamate + ADP + phosphate + H(+). It functions in the pathway cell wall biogenesis; peptidoglycan biosynthesis. Its function is as follows. Cell wall formation. Catalyzes the addition of glutamate to the nucleotide precursor UDP-N-acetylmuramoyl-L-alanine (UMA). This is UDP-N-acetylmuramoylalanine--D-glutamate ligase from Clostridium botulinum (strain Okra / Type B1).